The primary structure comprises 316 residues: Nucleoside diphosphate-linked moiety X motif 6 (316 aa).

The Nudix hydrolase domain maps to Ser-141–Tyr-273. The Nudix box motif lies at Gly-176–Gly-197.

It belongs to the Nudix hydrolase family. In terms of assembly, monomer and homodimer. In terms of tissue distribution, detected in liver, kidney and esophagus (at protein level). Ubiquitous.

The protein resides in the cytoplasm. It is found in the nucleus. The protein localises to the mitochondrion. Functionally, may contribute to the regulation of cell proliferation. This Homo sapiens (Human) protein is Nucleoside diphosphate-linked moiety X motif 6 (NUDT6).